The sequence spans 80 residues: Protein transport protein SSS1 (80 aa).

At 1–46 (MARASEKGEEKKQSNNQVEKLVEAPVEFVREGTQFLAKCKKPDLKE) the chain is on the cytoplasmic side. The chain crosses the membrane as a helical span at residues 47–75 (YTKIVKAVGIGFIAVGIIGYAIKLIHIPI). Topologically, residues 76–80 (RYVIV) are extracellular.

This sequence belongs to the SecE/SEC61-gamma family. Component of the heterotrimeric Sec61 complex, which is composed of SSH1, SBH1 and SSS1. Presumably three to four Sec61 heterotrimers assemble into an oligomeric ring with a central aqueous pore. In cotranslational ER import, the pore diameter varies from 9-15 A in a ribosome-free resting state to 40-60 A in a functional state when associated with the ribosome. The Sec61 complex is part of a channel-forming translocon complex whose composition seem to change dependent upon different functional states. During post-translational ER import the Sec61 complex associates with the Sec62/63 complex to form the Sec complex. SSH1 is a component of the heterotrimeric Ssh1 complex, which is composed of SSH1, SBH2 and SSS1. SSS1 interacts with OST1, OST4, SWP1 and WBP1, components of the OT complex.

Its subcellular location is the endoplasmic reticulum membrane. In terms of biological role, part of the Sec61 complex, which is the major component of channel-forming translocon complex that mediates protein translocation across the endoplasmic reticulum (ER). The functional states of the translocon complex include co- and post-translational ER import, cotranslational membrane protein integration and retrograde transport of misfolded proteins out of the ER. In the cotranslational pathway, ribosomes synthesizing presecretory proteins are targeted to the translocon by the cytosolic signal recognition particle (SRP) and its ER-localized receptor. The association of the Sec61 complex with the ribosome is mediated by the 28S rRNA of the large ribosomal subunit. SRP-independent post-translational translocation requires the association of additional factors, such as the Sec62/63 complex and KAR2. Also part of the Ssh1 complex, which probably is the major component of a channel-forming translocon complex that may function exclusively in the cotranslational pathway of protein ER import. This is Protein transport protein SSS1 (SSS1) from Saccharomyces cerevisiae (strain ATCC 204508 / S288c) (Baker's yeast).